Here is a 244-residue protein sequence, read N- to C-terminus: WUSCHEL-related homeobox 3 (244 aa).

The segment at residues 4 to 68 (VASTRWCPTP…NHKARDRQKL (65 aa)) is a DNA-binding region (homeobox; WUS-type).

This sequence belongs to the WUS homeobox family. Expressed in aerial parts of seedlings, inflorescences and flowers at low level. Expressed in a restricted number of L1 cells at the lateral regions of flower primordia.

It localises to the nucleus. Functionally, probable transcription factor required to initiate organ founder cells in a lateral domain of shoot meristems. Involved in the lateral sepal axis-dependent development of flowers, probably by regulating the proliferation of L1 cells at the lateral region of flower primordia. Required for the formation of the margin cells of the first and second whorl organs. The chain is WUSCHEL-related homeobox 3 (WOX3) from Arabidopsis thaliana (Mouse-ear cress).